The primary structure comprises 184 residues: Large ribosomal subunit protein bL9 (184 aa).

A disordered region spans residues 156 to 184 (RQAKLQNQKSEQQEAEQDASKEAADADDS). A compositionally biased stretch (basic and acidic residues) spans 173–184 (DASKEAADADDS).

This sequence belongs to the bacterial ribosomal protein bL9 family.

Functionally, binds to the 23S rRNA. This chain is Large ribosomal subunit protein bL9, found in Wolbachia pipientis subsp. Culex pipiens (strain wPip).